Consider the following 99-residue polypeptide: UPF0235 protein AHA_3661 (99 aa).

This sequence belongs to the UPF0235 family.

The chain is UPF0235 protein AHA_3661 from Aeromonas hydrophila subsp. hydrophila (strain ATCC 7966 / DSM 30187 / BCRC 13018 / CCUG 14551 / JCM 1027 / KCTC 2358 / NCIMB 9240 / NCTC 8049).